Here is a 145-residue protein sequence, read N- to C-terminus: Peptide methionine sulfoxide reductase MsrB (145 aa).

The MsrB domain occupies 4 to 127; it reads SEELKQRIGD…NSAALKFIPY (124 aa). Cysteine 116 functions as the Nucleophile in the catalytic mechanism.

The protein belongs to the MsrB Met sulfoxide reductase family.

The catalysed reaction is L-methionyl-[protein] + [thioredoxin]-disulfide + H2O = L-methionyl-(R)-S-oxide-[protein] + [thioredoxin]-dithiol. The sequence is that of Peptide methionine sulfoxide reductase MsrB from Streptococcus pyogenes serotype M6 (strain ATCC BAA-946 / MGAS10394).